A 388-amino-acid polypeptide reads, in one-letter code: Muscleblind-like protein 1 (388 aa).

Position 6 is a phosphothreonine (Thr6). 4 C3H1-type zinc fingers span residues 13 to 41 (WLTLEVCREFQRGTCSRPDTECKFAHPSK), 47 to 73 (NGRVIACFDSLKGRCSRENCKYLHPPP), 179 to 207 (TDRLEVCREYQRGNCNRGENDCRFAHPAD), and 215 to 241 (DNTVTVCMDYIKGRCSREKCKYFHPPA).

Belongs to the muscleblind family. Interacts with DDX1 and YBX1. Interacts with HNRNPH1; the interaction in RNA-independent. Interacts with RBPMS; the interaction allows cooperative assembly of RNA-bound stable cell-specific alternative splicing regulatory complexes. Highly expressed in cardiac, skeletal muscle and during myoblast differentiation. Weakly expressed in other tissues (at protein level). Expressed in heart, brain, placenta, lung, liver, skeletal muscle, kidney and pancreas.

The protein resides in the nucleus. It localises to the cytoplasm. Its subcellular location is the cytoplasmic granule. Mediates pre-mRNA alternative splicing regulation. Acts either as activator or repressor of splicing on specific pre-mRNA targets. Inhibits cardiac troponin-T (TNNT2) pre-mRNA exon inclusion but induces insulin receptor (IR) pre-mRNA exon inclusion in muscle. Antagonizes the alternative splicing activity pattern of CELF proteins. Regulates the TNNT2 exon 5 skipping through competition with U2AF2. Inhibits the formation of the spliceosome A complex on intron 4 of TNNT2 pre-mRNA. Binds to the stem-loop structure within the polypyrimidine tract of TNNT2 intron 4 during spliceosome assembly. Binds to the 5'-YGCU(U/G)Y-3'consensus sequence. Binds to the IR RNA. Binds to expanded CUG repeat RNA, which folds into a hairpin structure containing GC base pairs and bulged, unpaired U residues. Together with RNA binding proteins RBPMS and RBFOX2, activates vascular smooth muscle cells alternative splicing events. Regulates NCOR2 alternative splicing. The polypeptide is Muscleblind-like protein 1 (MBNL1) (Homo sapiens (Human)).